Here is a 208-residue protein sequence, read N- to C-terminus: ATP-dependent dethiobiotin synthetase BioD (208 aa).

11–16 (EVGKTF) is an ATP binding site. Thr-15 contributes to the Mg(2+) binding site. Lys-31 is a catalytic residue. Substrate is bound at residue Ser-35. ATP-binding positions include Asp-42, 95 to 98 (ETSG), and 155 to 156 (NQ). Positions 42 and 95 each coordinate Mg(2+).

Belongs to the dethiobiotin synthetase family. In terms of assembly, homodimer. Requires Mg(2+) as cofactor.

Its subcellular location is the cytoplasm. The enzyme catalyses (7R,8S)-7,8-diammoniononanoate + CO2 + ATP = (4R,5S)-dethiobiotin + ADP + phosphate + 3 H(+). Its pathway is cofactor biosynthesis; biotin biosynthesis; biotin from 7,8-diaminononanoate: step 1/2. In terms of biological role, catalyzes a mechanistically unusual reaction, the ATP-dependent insertion of CO2 between the N7 and N8 nitrogen atoms of 7,8-diaminopelargonic acid (DAPA, also called 7,8-diammoniononanoate) to form a ureido ring. The chain is ATP-dependent dethiobiotin synthetase BioD from Chlamydia felis (strain Fe/C-56) (Chlamydophila felis).